The chain runs to 590 residues: Ankyrin repeat-containing protein ITN1 (590 aa).

Residues 25–44 (ENQNPMIDPSPTPSPSATAT) are disordered. ANK repeat units follow at residues 73–102 (HNDT…SQME), 128–157 (LGET…RESI), 163–192 (SGYD…TLSQ), 197–226 (SNAT…NLLE), 231–260 (NNKN…QLAR), 265–294 (KGQT…AIVM), and 299–329 (SCNT…NANT). Transmembrane regions (helical) follow at residues 422–442 (VTVV…TVPG), 460–480 (IFFI…VVQI), 500–520 (LMWL…YIVV), and 531–551 (VTVV…YYVV).

As to quaternary structure, interacts with REM19/RTV1. Expressed in roots, shoots, leaf vasculature and stems.

Its subcellular location is the cell membrane. Its function is as follows. Involved in salt stress tolerance. May act through abscisic acid (ABA) signaling pathways and promote reactive oxygen species (ROS) production. In Arabidopsis thaliana (Mouse-ear cress), this protein is Ankyrin repeat-containing protein ITN1.